The sequence spans 119 residues: ATP-dependent Clp protease adapter protein ClpS (119 aa).

The disordered stretch occupies residues 1 to 29 (MICPPGENKSMAERKQGGQGNGVGSSVVT).

It belongs to the ClpS family. In terms of assembly, binds to the N-terminal domain of the chaperone ClpA.

Its function is as follows. Involved in the modulation of the specificity of the ClpAP-mediated ATP-dependent protein degradation. This chain is ATP-dependent Clp protease adapter protein ClpS, found in Caulobacter vibrioides (strain ATCC 19089 / CIP 103742 / CB 15) (Caulobacter crescentus).